The sequence spans 1362 residues: Bromodomain-containing protein 4 (1362 aa).

Positions 1-58 (MSAESGPGTRLRNLPVMGDGLETSQMSTTQAQAQPQPANAASTNPPPPETSNPNKPKR) are disordered. Low complexity predominate over residues 23-43 (TSQMSTTQAQAQPQPANAAST). The Bromo 1 domain occupies 58–164 (RQTNQLQYLL…KLFLQKINEL (107 aa)). Residue K99 forms a Glycyl lysine isopeptide (Lys-Gly) (interchain with G-Cter in SUMO2) linkage. Disordered stretches follow at residues 174-229 (VQAK…PAVT), 242-352 (VPPQ…KVSE), and 463-615 (EPVV…YEEK). Positions 197-211 (PNTTQASTPPQTQTP) are enriched in low complexity. Pro residues-rich tracts occupy residues 212 to 227 (QPNP…PFPA) and 243 to 266 (PPQP…PAPQ). A compositionally biased stretch (basic and acidic residues) spans 320-336 (QRRESSRPVKPPKKDVP). The Bromo 2 domain maps to 348–457 (SKVSEQLKCC…DVFEMRFAKM (110 aa)). S470 is modified (phosphoserine). The segment covering 478–497 (KVVAPPSSSDSSSDSSSDSD) has biased composition (low complexity). Residues S484, S488, S492, S494, S498, S499, and S503 each carry the phosphoserine; by CK2 modification. Residues 484–503 (SSSDSSSDSSSDSDSSTDDS) are NPS region. The BID region stretch occupies residues 524–579 (QLAALSQPQQNKPKKKEKDKKEKKKEKHKRKEEVEENKKSKAKEPPPKKTKKNNSS). Positions 535 to 553 (KPKKKEKDKKEKKKEKHKR) are enriched in basic residues. Residues 554-570 (KEEVEENKKSKAKEPPP) show a composition bias toward basic and acidic residues. K585 participates in a covalent cross-link: Glycyl lysine isopeptide (Lys-Gly) (interchain with G-Cter in SUMO2). Residues 600–682 (ESEEEDKCKP…SCLRKKRKPQ (83 aa)) enclose the NET domain. At S601 the chain carries Phosphoserine. Over residues 605-615 (DKCKPMSYEEK) the composition is skewed to basic and acidic residues. Glycyl lysine isopeptide (Lys-Gly) (interchain with G-Cter in SUMO2) cross-links involve residues K645 and K694. The tract at residues 674–1100 (CLRKKRKPQA…PKKQELRAAS (427 aa)) is disordered. The span at 699 to 712 (SSSESESSSESSSS) shows a compositional bias: low complexity. Residues 724 to 744 (KSKKKGHPGREQKKHHHHHHQ) show a composition bias toward basic residues. Pro residues-rich tracts occupy residues 751–785 (APVP…PPSM), 833–846 (PELP…PEHS), and 881–890 (PPKPARPPAV). A compositionally biased stretch (low complexity) spans 926–936 (MQMQLYLQQLQ). Pro residues-rich tracts occupy residues 953–964 (QPPPPLPPPPHP), 973–996 (QPPP…PPRP), and 1010–1034 (QPPP…PQPA). The segment covering 1041–1050 (QHHHSPRHHK) has biased composition (basic residues). The C-terminal (CTD) region stretch occupies residues 1047–1362 (RHHKSDPYST…LLSIFEENLF (316 aa)). Residue K1050 forms a Glycyl lysine isopeptide (Lys-Gly) (interchain with G-Cter in SUMO2) linkage. The span at 1071-1091 (PQMSQFQSLTHQSPPQQNVQP) shows a compositional bias: polar residues. At K1111 the chain carries N6-acetyllysine; alternate. K1111 participates in a covalent cross-link: Glycyl lysine isopeptide (Lys-Gly) (interchain with G-Cter in SUMO1); alternate. K1111 is covalently cross-linked (Glycyl lysine isopeptide (Lys-Gly) (interchain with G-Cter in SUMO2); alternate). Residues 1116 to 1339 (HSPIIRSEPF…KREQERRRRE (224 aa)) form a disordered region. Phosphoserine occurs at positions 1117 and 1126. The span at 1175–1196 (PDKDKQKQEPKTPVAPKKDLKI) shows a compositional bias: basic and acidic residues. A Glycyl lysine isopeptide (Lys-Gly) (interchain with G-Cter in SUMO2) cross-link involves residue K1197. S1201 and S1204 each carry phosphoserine. A compositionally biased stretch (low complexity) spans 1211–1223 (TTPSSTAKSSSDS). Over residues 1225 to 1284 (EQFRRAAREKEEREKALKAQAEHAEKEKERLRQERMRSREDEDALEQARRAHEEARRRQE) the composition is skewed to basic and acidic residues. The span at 1285 to 1313 (QQQQQRQEQQQQQQQQAAAVAAAATPQAQ) shows a compositional bias: low complexity. Over residues 1323–1339 (QQRELARKREQERRRRE) the composition is skewed to basic and acidic residues.

It belongs to the BET family. In terms of assembly, interacts with p53/TP53; the interaction is direct. Interacts (via CTD region) with CDK9 and CCNT1, acting as an associated component of P-TEFb complex. Interacts with RELA (when acetylated at 'Lys-310'). Interacts (via NET domain) with NSD3, CHD4, BICRA and ATAD5. The interaction with BICRA bridges BRD4 to the GBAF complex. Interacts (via NET domain) with JMJD6 (via JmjC and N-terminal domains); the interaction is stronger in presence of ssRNA and recruits JMJD6 on distal enhancers. Interacts with NSD3. Interacts with NIPBL. As to quaternary structure, interacts with SMC2. Interacts with NCAPD3. (Microbial infection) Interacts with bovine papillomavirus type 1 regulatory protein E2. This interactions may serve for the tethering of viral genomes to host mitotic chromosomes allowing successful partitioning of the viral genome during cell division. In terms of assembly, (Microbial infection) Interacts with Epstein-Barr virus (EBV) protein EBNA1; this interaction facilitates transcriptional activation by EBNA1. As to quaternary structure, (Microbial infection) Interacts with human herpes virus-8 (HHV-8) protein LANA. In terms of processing, phosphorylation by CK2 disrupt the intramolecular binding between the bromo domain 2 and the NPS region and promotes binding between the NPS and the BID regions, leading to activate the protein and promote binding to acetylated histones. In absence of phosphorylation, BRD4 does not localize to p53/TP53 target gene promoters, phosphorylation promoting recruitment to p53/TP53 target promoters. Ubiquitously expressed.

It is found in the nucleus. It localises to the chromosome. With respect to regulation, inhibited by JQ1, a thieno-triazolo-1,4-diazepine derivative, which specifically inhibits members of the BET family (BRD2, BRD3 and BRD4). The first bromo domain is inhibited by GSK778 (iBET-BD1), which specifically inhibits the first bromo domain of members of the BET family (BRD2, BRD3 and BRD4). The second bromo domain is inhibited by ABBV-744, which specifically inhibits the second bromo domain of members of the BET family (BRD2, BRD3 and BRD4). The second bromo domain is inhibited by GSK046 (iBET-BD2), which specifically inhibits the second bromo domain of members of the BET family (BRD2, BRD3 and BRD4). Its function is as follows. Chromatin reader protein that recognizes and binds acetylated histones and plays a key role in transmission of epigenetic memory across cell divisions and transcription regulation. Remains associated with acetylated chromatin throughout the entire cell cycle and provides epigenetic memory for postmitotic G1 gene transcription by preserving acetylated chromatin status and maintaining high-order chromatin structure. During interphase, plays a key role in regulating the transcription of signal-inducible genes by associating with the P-TEFb complex and recruiting it to promoters. Also recruits P-TEFb complex to distal enhancers, so called anti-pause enhancers in collaboration with JMJD6. BRD4 and JMJD6 are required to form the transcriptionally active P-TEFb complex by displacing negative regulators such as HEXIM1 and 7SKsnRNA complex from P-TEFb, thereby transforming it into an active form that can then phosphorylate the C-terminal domain (CTD) of RNA polymerase II. Regulates differentiation of naive CD4(+) T-cells into T-helper Th17 by promoting recruitment of P-TEFb to promoters. Promotes phosphorylation of 'Ser-2' of the C-terminal domain (CTD) of RNA polymerase II. According to a report, directly acts as an atypical protein kinase and mediates phosphorylation of 'Ser-2' of the C-terminal domain (CTD) of RNA polymerase II; these data however need additional evidences in vivo. In addition to acetylated histones, also recognizes and binds acetylated RELA, leading to further recruitment of the P-TEFb complex and subsequent activation of NF-kappa-B. Also acts as a regulator of p53/TP53-mediated transcription: following phosphorylation by CK2, recruited to p53/TP53 specific target promoters. Functionally, acts as a chromatin insulator in the DNA damage response pathway. Inhibits DNA damage response signaling by recruiting the condensin-2 complex to acetylated histones, leading to chromatin structure remodeling, insulating the region from DNA damage response by limiting spreading of histone H2AX/H2A.x phosphorylation. This chain is Bromodomain-containing protein 4 (BRD4), found in Homo sapiens (Human).